A 717-amino-acid chain; its full sequence is Fatty acid oxidation complex subunit alpha (717 aa).

Residues 1–190 (MESTSAFNLQ…KAGLVDDVVP (190 aa)) are enoyl-CoA hydratase. Positions 306 to 717 (RALHSVGVLG…AGNLQAEMTV (412 aa)) are 3-hydroxyacyl-CoA dehydrogenase.

In the N-terminal section; belongs to the enoyl-CoA hydratase/isomerase family. The protein in the central section; belongs to the 3-hydroxyacyl-CoA dehydrogenase family. In terms of assembly, heterotetramer of two alpha chains (FadJ) and two beta chains (FadI).

Its subcellular location is the cytoplasm. It catalyses the reaction a (3S)-3-hydroxyacyl-CoA = a (2E)-enoyl-CoA + H2O. It carries out the reaction a 4-saturated-(3S)-3-hydroxyacyl-CoA = a (3E)-enoyl-CoA + H2O. The catalysed reaction is a (3S)-3-hydroxyacyl-CoA + NAD(+) = a 3-oxoacyl-CoA + NADH + H(+). The enzyme catalyses (3S)-3-hydroxybutanoyl-CoA = (3R)-3-hydroxybutanoyl-CoA. The protein operates within lipid metabolism; fatty acid beta-oxidation. In terms of biological role, catalyzes the formation of a hydroxyacyl-CoA by addition of water on enoyl-CoA. Also exhibits 3-hydroxyacyl-CoA epimerase and 3-hydroxyacyl-CoA dehydrogenase activities. This is Fatty acid oxidation complex subunit alpha from Cronobacter sakazakii (strain ATCC BAA-894) (Enterobacter sakazakii).